Reading from the N-terminus, the 84-residue chain is Large ribosomal subunit protein bL27 (84 aa).

The segment at Met1–Leu21 is disordered. Basic and acidic residues predominate over residues Asn12 to Leu21.

The protein belongs to the bacterial ribosomal protein bL27 family.

This chain is Large ribosomal subunit protein bL27, found in Methylacidiphilum infernorum (isolate V4) (Methylokorus infernorum (strain V4)).